A 260-amino-acid polypeptide reads, in one-letter code: Small ribosomal subunit protein uS3 (260 aa).

The KH type-2 domain occupies 39 to 114 (LRQYIEQKLG…QIRINVVEVQ (76 aa)). Residues 218–260 (QEVATPPPSPRDRDRDRGDRDREPRRRQQQRRRQQFEDRSNEG) are disordered. Composition is skewed to basic and acidic residues over residues 227–243 (PRDR…EPRR) and 251–260 (QQFEDRSNEG).

It belongs to the universal ribosomal protein uS3 family. As to quaternary structure, part of the 30S ribosomal subunit. Forms a tight complex with proteins S10 and S14.

In terms of biological role, binds the lower part of the 30S subunit head. Binds mRNA in the 70S ribosome, positioning it for translation. The chain is Small ribosomal subunit protein uS3 from Nostoc sp. (strain PCC 7120 / SAG 25.82 / UTEX 2576).